A 367-amino-acid chain; its full sequence is Probable outer membrane usher protein LpfC (367 aa).

An N-terminal signal peptide occupies residues 1-30 (MSRKTVSRTFSSFSISVVAVAVASTFSAHA).

This sequence belongs to the fimbrial export usher family.

Its subcellular location is the cell outer membrane. Part of the lpfABCC'DE fimbrial operon. LP fimbriae may participate in the interaction with eukaryotic cells by assisting in microcolony formation. Could be involved in the export and assembly of the fimbrial subunits across the outer membrane. The polypeptide is Probable outer membrane usher protein LpfC (lpfC) (Escherichia coli O157:H7).